Reading from the N-terminus, the 609-residue chain is Kelch domain-containing protein 10 homolog (609 aa).

Positions 103 to 146 (ASDLDEEEEEEDDDVDVDVDYGDTDSESEFEEMYSDEWTSSSDE) are disordered. Over residues 104–137 (SDLDEEEEEEDDDVDVDVDYGDTDSESEFEEMYS) the composition is skewed to acidic residues. Kelch repeat units lie at residues 214 to 277 (HLYS…IHNN), 279 to 334 (LISH…IHKH), 335 to 381 (FLYT…RYRH), 389 to 437 (HIFV…GNRG), 458 to 508 (EAFI…HSDN), and 510 to 554 (CMYV…YNDN). The segment at 576–609 (LPPQRRRRLDTSQPDPSMLISLYSNPKRARSSTQ) is disordered.

In terms of assembly, interacts with Elongin-C; may be the substrate recognition component of an E3 ubiquitin ligase complex.

Activates the Pk92B/DASK1-MAPK signaling cascade. This chain is Kelch domain-containing protein 10 homolog (slim), found in Drosophila melanogaster (Fruit fly).